The primary structure comprises 137 residues: Basic phospholipase A2 homolog Bsc-K49 (137 aa).

The N-terminal stretch at methionine 1–glycine 16 is a signal peptide. 7 cysteine pairs are disulfide-bonded: cysteine 42–cysteine 131, cysteine 44–cysteine 60, cysteine 59–cysteine 111, cysteine 65–cysteine 137, cysteine 66–cysteine 104, cysteine 73–cysteine 97, and cysteine 91–cysteine 102. An important for membrane-damaging activities in eukaryotes and bacteria; heparin-binding region spans residues lysine 121–lysine 133.

Belongs to the phospholipase A2 family. Group II subfamily. K49 sub-subfamily. Homodimer; non-covalently linked. In terms of tissue distribution, expressed by the venom gland.

It is found in the secreted. Its function is as follows. Snake venom phospholipase A2 that lacks enzymatic activity. Is myotoxic, and displays edema-inducing activities. A model of myotoxic mechanism has been proposed: an apo Lys49-PLA2 is activated by the entrance of a hydrophobic molecule (e.g. fatty acid) at the hydrophobic channel of the protein leading to a reorientation of a monomer. This reorientation causes a transition between 'inactive' to 'active' states, causing alignment of C-terminal and membrane-docking sites (MDoS) side-by-side and putting the membrane-disruption sites (MDiS) in the same plane, exposed to solvent and in a symmetric position for both monomers. The MDoS region stabilizes the toxin on membrane by the interaction of charged residues with phospholipid head groups. Subsequently, the MDiS region destabilizes the membrane with penetration of hydrophobic residues. This insertion causes a disorganization of the membrane, allowing an uncontrolled influx of ions (i.e. calcium and sodium), and eventually triggering irreversible intracellular alterations and cell death. This Bothriechis schlegelii (Eyelash palm pitviper) protein is Basic phospholipase A2 homolog Bsc-K49.